We begin with the raw amino-acid sequence, 142 residues long: MSEKVDFYDFEKLLDKAYEELPENVKHHHSRFEVPPAQVTIAGNRTIIENFVDIAEAMNRDPNHLLKFILREVATAGTLEGRRAILQGRFTPYLIANKMKKYLKEFVICPVCGSPDTKIIKKGRFHFLKCEACGAETPIQHL.

The protein belongs to the eIF-2-beta/eIF-5 family. In terms of assembly, heterotrimer composed of an alpha, a beta and a gamma chain.

EIF-2 functions in the early steps of protein synthesis by forming a ternary complex with GTP and initiator tRNA. In Thermococcus kodakarensis (strain ATCC BAA-918 / JCM 12380 / KOD1) (Pyrococcus kodakaraensis (strain KOD1)), this protein is Translation initiation factor 2 subunit beta.